We begin with the raw amino-acid sequence, 93 residues long: Large ribosomal subunit protein uL23 (93 aa).

This sequence belongs to the universal ribosomal protein uL23 family. Part of the 50S ribosomal subunit. Contacts protein L29, and trigger factor when it is bound to the ribosome.

Its function is as follows. One of the early assembly proteins it binds 23S rRNA. One of the proteins that surrounds the polypeptide exit tunnel on the outside of the ribosome. Forms the main docking site for trigger factor binding to the ribosome. The protein is Large ribosomal subunit protein uL23 of Campylobacter curvus (strain 525.92).